We begin with the raw amino-acid sequence, 555 residues long: MMDNKDLEAEIHPLKNEDKKSQENPGNLPRNEDNLKSKPVPSRLSRCRTVAFFLSLFTCLFVVFVLSFIIPCPDRPSSQGTWKLDYNNAVMYDFLALGDINKDKVQDVLFLYKNTNSSNNLTRSCADEGFSTPCAFVVAVSGANGSVLWERPVAQDVALVKCAMPQTLDSDEVSSACIVVGRAGSFVAVSFFTGETLWSHPSSFSGNVSILSPLLQVPDIDGDGDGTPDLLILAQEGQEVSGALYSGSTGYQIGHRGSLGVDGDGVALLHVTRTGAQYILLPCASALCGFSVKSLYERITGRDGHFKEDPYWENMLNHSVHRRLLHRLGAVRYLMNIPGKAGQDLLLVTSEACVLLDGQDLEPRWTLGEVQVLRKPILGHYKPDTLAVVIENGTSIDRQILLLDLSTGSILWSQPLPSLPGGPPSTSLMTADHRSAFFFWGLHDLVSTNEMDPPDVQHSLYMFHPTLPGILLELANVSANIVAFDAVLLEPSRHAAYVLLTGPASSDVPGLVSVTKHKVQDLVPGSRVIHLGEGSSDSDQAIRDRFSRLRYRSEM.

Residues 1–22 (MMDNKDLEAEIHPLKNEDKKSQ) are compositionally biased toward basic and acidic residues. Positions 1–40 (MMDNKDLEAEIHPLKNEDKKSQENPGNLPRNEDNLKSKPV) are disordered. At 1–49 (MMDNKDLEAEIHPLKNEDKKSQENPGNLPRNEDNLKSKPVPSRLSRCRT) the chain is on the cytoplasmic side. Ser-21 is subject to Phosphoserine. A helical; Signal-anchor for type II membrane protein membrane pass occupies residues 50–70 (VAFFLSLFTCLFVVFVLSFII). Topologically, residues 71 to 555 (PCPDRPSSQG…FSRLRYRSEM (485 aa)) are extracellular. Asn-116, Asn-120, Asn-317, Asn-392, and Asn-476 each carry an N-linked (GlcNAc...) asparagine glycan.

It belongs to the FAM234 family.

The protein localises to the membrane. This Mus musculus (Mouse) protein is Protein FAM234A.